The chain runs to 36 residues: Photosystem I reaction center subunit VIII (36 aa).

A helical transmembrane segment spans residues 9–29 (ILVPLVGLVFPAVTMASLFLY).

It belongs to the PsaI family.

It localises to the plastid. Its subcellular location is the chloroplast thylakoid membrane. Functionally, may help in the organization of the PsaL subunit. This Staurastrum punctulatum (Green alga) protein is Photosystem I reaction center subunit VIII.